Here is a 271-residue protein sequence, read N- to C-terminus: Calcium-binding protein 4 (271 aa).

Residues 1-105 (MATEHNVQLV…RSDPQQDAAQ (105 aa)) form a disordered region. Ser-37 carries the phosphoserine; by PKC/PRKCZ modification. Residues 45-67 (GSQKASSGDQSSSQGSEASGSSK) are compositionally biased toward low complexity. Residues 87–96 (ASHRHSHRHR) show a composition bias toward basic residues. 4 EF-hand domains span residues 125-160 (EELE…LGYM), 179-196 (GFVD…KLRE), 202-237 (LGVR…LLGE), and 239-271 (LEGT…LSTG). Ca(2+) is bound by residues Asp-138, Asp-140, Asp-142, Tyr-144, and Glu-149. The Ca(2+) site is built by Asp-215, Asp-217, Asp-219, Arg-221, Glu-226, Asp-252, Asn-254, Asp-256, Thr-258, and Glu-263.

Interacts with CACNA1F and CACNA1D (via IQ domain) in a calcium independent manner. Interacts (via N-terminus) with UNC119. In terms of processing, phosphorylated. Phosphorylation levels change with the light conditions and regulate the activity, but has no effect on calcium binding. As to expression, expressed in retina and in the inner hair cells (IHC) of the cochlea.

Its subcellular location is the cytoplasm. It localises to the presynapse. Its function is as follows. Involved in normal synaptic function through regulation of Ca(2+) influx and neurotransmitter release in photoreceptor synaptic terminals and in auditory transmission. Modulator of CACNA1D and CACNA1F, suppressing the calcium-dependent inactivation and shifting the activation range to more hyperpolarized voltages. This Mus musculus (Mouse) protein is Calcium-binding protein 4 (Cabp4).